Here is a 607-residue protein sequence, read N- to C-terminus: ATP-dependent RNA helicase-like protein DB10 (607 aa).

The span at 1 to 10 (MAVVTASSAG) shows a compositional bias: polar residues. Disordered regions lie at residues 1 to 25 (MAVV…KPWK) and 66 to 108 (VFVS…DGTS). A WW domain is found at 18–52 (PTLPKPWKGLVDGTTGFIYFWNPETNDTQYERPVP). The span at 89-98 (RGSNNKIARS) shows a compositional bias: polar residues. A compositionally biased stretch (basic and acidic residues) spans 99–108 (SSDRFHDGTS). The Q motif signature appears at 145 to 173 (TSFEATGFPSEIVREMHQAGFSAPTPIQA). Positions 176-350 (WPIALQGRDI…ADLLVNSVQV (175 aa)) constitute a Helicase ATP-binding domain. Position 189–196 (189–196 (AKTGSGKT)) interacts with ATP. Residues 298 to 301 (DEAD) carry the DEAD box motif. The region spanning 379-523 (RVEQILRSKE…CVPTELRDMA (145 aa)) is the Helicase C-terminal domain. The interval 519–607 (LRDMASRGGG…WSGKKSRFTD (89 aa)) is disordered. A compositionally biased stretch (gly residues) spans 538–548 (SGPGGRGGRGG). Positions 562 to 574 (GYDRGSRDSDRYG) are enriched in basic and acidic residues.

This sequence belongs to the DEAD box helicase family.

The enzyme catalyses ATP + H2O = ADP + phosphate + H(+). The sequence is that of ATP-dependent RNA helicase-like protein DB10 from Nicotiana sylvestris (Wood tobacco).